The sequence spans 121 residues: Basic phospholipase A2 homolog GodMT-II (121 aa).

7 cysteine pairs are disulfide-bonded: cysteine 26–cysteine 115, cysteine 28–cysteine 44, cysteine 43–cysteine 95, cysteine 49–cysteine 121, cysteine 50–cysteine 88, cysteine 57–cysteine 81, and cysteine 75–cysteine 86. An important for membrane-damaging activities in eukaryotes and bacteria; heparin-binding region spans residues lysine 105 to lysine 117.

This sequence belongs to the phospholipase A2 family. Group II subfamily. K49 sub-subfamily. As to quaternary structure, monomer. As to expression, expressed by the venom gland.

Its subcellular location is the secreted. In terms of biological role, snake venom phospholipase A2 homolog that lacks enzymatic activity but shows high myotoxic activities. In vivo, induces a mild edema when subcutaneously injected into mice foot pad. The sequence is that of Basic phospholipase A2 homolog GodMT-II from Cerrophidion godmani (Porthidium godmani).